Consider the following 40-residue polypeptide: Photosystem II reaction center protein J (40 aa).

The chain crosses the membrane as a helical span at residues 8 to 28 (IPLWLVGTVTGIPVIGLIGVF).

It belongs to the PsbJ family. PSII is composed of 1 copy each of membrane proteins PsbA, PsbB, PsbC, PsbD, PsbE, PsbF, PsbH, PsbI, PsbJ, PsbK, PsbL, PsbM, PsbT, PsbX, PsbY, PsbZ, Psb30/Ycf12, at least 3 peripheral proteins of the oxygen-evolving complex and a large number of cofactors. It forms dimeric complexes.

It is found in the plastid. Its subcellular location is the chloroplast thylakoid membrane. Functionally, one of the components of the core complex of photosystem II (PSII). PSII is a light-driven water:plastoquinone oxidoreductase that uses light energy to abstract electrons from H(2)O, generating O(2) and a proton gradient subsequently used for ATP formation. It consists of a core antenna complex that captures photons, and an electron transfer chain that converts photonic excitation into a charge separation. The sequence is that of Photosystem II reaction center protein J from Musa acuminata (Banana).